We begin with the raw amino-acid sequence, 414 residues long: Serine hydroxymethyltransferase (414 aa).

(6S)-5,6,7,8-tetrahydrofolate-binding positions include Leu-116 and 120–122 (GHL). The residue at position 224 (Lys-224) is an N6-(pyridoxal phosphate)lysine. Residue 348 to 350 (SPF) participates in (6S)-5,6,7,8-tetrahydrofolate binding.

This sequence belongs to the SHMT family. Homodimer. Pyridoxal 5'-phosphate serves as cofactor.

Its subcellular location is the cytoplasm. It carries out the reaction (6R)-5,10-methylene-5,6,7,8-tetrahydrofolate + glycine + H2O = (6S)-5,6,7,8-tetrahydrofolate + L-serine. It functions in the pathway one-carbon metabolism; tetrahydrofolate interconversion. It participates in amino-acid biosynthesis; glycine biosynthesis; glycine from L-serine: step 1/1. Its function is as follows. Catalyzes the reversible interconversion of serine and glycine with tetrahydrofolate (THF) serving as the one-carbon carrier. This reaction serves as the major source of one-carbon groups required for the biosynthesis of purines, thymidylate, methionine, and other important biomolecules. Also exhibits THF-independent aldolase activity toward beta-hydroxyamino acids, producing glycine and aldehydes, via a retro-aldol mechanism. This Campylobacter jejuni subsp. doylei (strain ATCC BAA-1458 / RM4099 / 269.97) protein is Serine hydroxymethyltransferase.